A 517-amino-acid chain; its full sequence is 2-isopropylmalate synthase (517 aa).

Positions 5–268 constitute a Pyruvate carboxyltransferase domain; it reads IIIFDTTLRD…DTRINTQEIH (264 aa). Asp14, His202, His204, and Asn238 together coordinate Mn(2+). The segment at 393-517 is regulatory domain; sequence SLDVITSQTI…ADLKSHKISQ (125 aa).

The protein belongs to the alpha-IPM synthase/homocitrate synthase family. LeuA type 1 subfamily. Homodimer. Mn(2+) serves as cofactor.

It localises to the cytoplasm. The catalysed reaction is 3-methyl-2-oxobutanoate + acetyl-CoA + H2O = (2S)-2-isopropylmalate + CoA + H(+). The protein operates within amino-acid biosynthesis; L-leucine biosynthesis; L-leucine from 3-methyl-2-oxobutanoate: step 1/4. Functionally, catalyzes the condensation of the acetyl group of acetyl-CoA with 3-methyl-2-oxobutanoate (2-ketoisovalerate) to form 3-carboxy-3-hydroxy-4-methylpentanoate (2-isopropylmalate). This is 2-isopropylmalate synthase from Histophilus somni (strain 129Pt) (Haemophilus somnus).